We begin with the raw amino-acid sequence, 313 residues long: Methionyl-tRNA formyltransferase (313 aa).

113 to 116 (SLLP) lines the (6S)-5,6,7,8-tetrahydrofolate pocket.

Belongs to the Fmt family.

It catalyses the reaction L-methionyl-tRNA(fMet) + (6R)-10-formyltetrahydrofolate = N-formyl-L-methionyl-tRNA(fMet) + (6S)-5,6,7,8-tetrahydrofolate + H(+). Attaches a formyl group to the free amino group of methionyl-tRNA(fMet). The formyl group appears to play a dual role in the initiator identity of N-formylmethionyl-tRNA by promoting its recognition by IF2 and preventing the misappropriation of this tRNA by the elongation apparatus. The chain is Methionyl-tRNA formyltransferase from Francisella tularensis subsp. holarctica (strain FTNF002-00 / FTA).